The following is a 369-amino-acid chain: C-C chemokine receptor type 9 (369 aa).

Residues 1-48 (MTPTDFTSPIPNMADDYGSESTSSMEDYVNFNFTDFYCEKNNVRQFAS) lie on the Extracellular side of the membrane. Asn-32 is a glycosylation site (N-linked (GlcNAc...) asparagine). 2 disulfides stabilise this stretch: Cys-38–Cys-289 and Cys-119–Cys-198. The helical transmembrane segment at 49–74 (HFLPPLYWLVFIVGALGNSLVILVYW) threads the bilayer. Residues 75-85 (YCTRVKTMTDM) lie on the Cytoplasmic side of the membrane. A helical membrane pass occupies residues 86–109 (FLLNLAIADLLFLVTLPFWAIAAA). The Extracellular portion of the chain corresponds to 110–120 (DQWKFQTFMCK). The helical transmembrane segment at 121-150 (VVNSMYKMNFYSCVLLIMCISVDRYIAIAQ) threads the bilayer. At 151-159 (AMRAHTWRE) the chain is on the cytoplasmic side. Residues 160-185 (KRLLYSKMVCFTIWVLAAALCIPEIL) traverse the membrane as a helical segment. Over 186 to 208 (YSQIKEESGIAICTMVYPSDEST) the chain is Extracellular. The chain crosses the membrane as a helical span at residues 209 to 243 (KLKSAVLTLKVILGFFLPFVVMACCYTIIIHTLIQ). Topologically, residues 244–248 (AKKSS) are cytoplasmic. A helical membrane pass occupies residues 249–283 (KHKALKVTITVLTVFVLSQFPYNCILLVQTIDAYA). The Extracellular portion of the chain corresponds to 284–290 (MFISNCA). The chain crosses the membrane as a helical span at residues 291–321 (VSTNIDICFQVTQTIAFFHSCLNPVLYVFVG). At 322–369 (ERFRRDLVKTLKNLGCISQAQWVSFTRREGSLKLSSMLLETTSGALSL) the chain is on the cytoplasmic side.

It belongs to the G-protein coupled receptor 1 family. As to expression, highly expressed in the thymus and low in lymph nodes and spleen.

Its subcellular location is the cell membrane. Its function is as follows. Receptor for chemokine SCYA25/TECK. Subsequently transduces a signal by increasing the intracellular calcium ions level. (Microbial infection) Alternative coreceptor with CD4 for HIV-1 infection. The chain is C-C chemokine receptor type 9 (CCR9) from Homo sapiens (Human).